Here is a 200-residue protein sequence, read N- to C-terminus: MAASQQQASAASSAAGVSGPSSAGGPGPQQQPQPPAQLVGPAQSGLLQQQQQDFDPVQRYKMLIPQLKESLQTLMKVAAQNLIQNTNIDNGQKSSDGPIQRFDKCLEEFYALCDQLELCLRLAHECLSQSCDSAKHSPTLVPTATKPDAVQPDSLPYPQYLAVIKAQISCAKDIHTALLDCANKVTGKTPAPPAGPGGTL.

Low complexity-rich tracts occupy residues 1-21 and 36-48; these read MAASQQQASAASSAAGVSGPS and AQLVGPAQSGLLQ. Residues 1–48 are disordered; that stretch reads MAASQQQASAASSAAGVSGPSSAGGPGPQQQPQPPAQLVGPAQSGLLQ. Ala-2 carries the post-translational modification N-acetylalanine.

The protein belongs to the Mediator complex subunit 29 family. As to quaternary structure, component of the Mediator complex, which is composed of MED1, MED4, MED6, MED7, MED8, MED9, MED10, MED11, MED12, MED13, MED13L, MED14, MED15, MED16, MED17, MED18, MED19, MED20, MED21, MED22, MED23, MED24, MED25, MED26, MED27, MED29, MED30, MED31, CCNC, CDK8 and CDC2L6/CDK11. The MED12, MED13, CCNC and CDK8 subunits form a distinct module termed the CDK8 module. Mediator containing the CDK8 module is less active than Mediator lacking this module in supporting transcriptional activation. Individual preparations of the Mediator complex lacking one or more distinct subunits have been variously termed ARC, CRSP, DRIP, PC2, SMCC and TRAP. Associates with the MED18/MED20 heteromer.

It localises to the nucleus. In terms of biological role, component of the Mediator complex, a coactivator involved in the regulated transcription of nearly all RNA polymerase II-dependent genes. Mediator functions as a bridge to convey information from gene-specific regulatory proteins to the basal RNA polymerase II transcription machinery. Mediator is recruited to promoters by direct interactions with regulatory proteins and serves as a scaffold for the assembly of a functional preinitiation complex with RNA polymerase II and the general transcription factors. The chain is Mediator of RNA polymerase II transcription subunit 29 (MED29) from Pongo abelii (Sumatran orangutan).